A 368-amino-acid polypeptide reads, in one-letter code: UPF0284 protein PCC8801_3324 (368 aa).

The protein belongs to the UPF0284 family.

The sequence is that of UPF0284 protein PCC8801_3324 from Rippkaea orientalis (strain PCC 8801 / RF-1) (Cyanothece sp. (strain PCC 8801)).